Reading from the N-terminus, the 387-residue chain is Acyltransferase MdmB (387 aa).

10 helical membrane-spanning segments follow: residues 8–28 (LPSL…CHIA), 45–65 (ITTL…FVLA), 85–105 (IYPL…SLAE), 139–161 (TPSW…YRLV), 170–190 (WWCA…TSQF), 209–229 (CWLP…ALIL), 236–256 (GPGV…TQVV), 258–278 (PMFT…TALA), 292–312 (AVLV…FMVI), and 336–356 (ALAL…HTVV).

It belongs to the acyltransferase 3 family.

The protein localises to the cell membrane. Its function is as follows. Catalyzes the acylation of the mycaminose sugar during midecamycin biosynthesis. The chain is Acyltransferase MdmB (mdmB) from Streptomyces mycarofaciens.